Here is a 251-residue protein sequence, read N- to C-terminus: Triosephosphate isomerase (251 aa).

Residue 9-11 participates in substrate binding; it reads NWK. His-94 functions as the Electrophile in the catalytic mechanism. Glu-166 functions as the Proton acceptor in the catalytic mechanism. Residues Gly-172, Ser-211, and 232–233 each bind substrate; that span reads GG.

Belongs to the triosephosphate isomerase family. In terms of assembly, homodimer.

Its subcellular location is the cytoplasm. The catalysed reaction is D-glyceraldehyde 3-phosphate = dihydroxyacetone phosphate. Its pathway is carbohydrate biosynthesis; gluconeogenesis. It functions in the pathway carbohydrate degradation; glycolysis; D-glyceraldehyde 3-phosphate from glycerone phosphate: step 1/1. Functionally, involved in the gluconeogenesis. Catalyzes stereospecifically the conversion of dihydroxyacetone phosphate (DHAP) to D-glyceraldehyde-3-phosphate (G3P). In Xanthomonas euvesicatoria pv. vesicatoria (strain 85-10) (Xanthomonas campestris pv. vesicatoria), this protein is Triosephosphate isomerase.